The sequence spans 500 residues: Probable cytosol aminopeptidase (500 aa).

Mn(2+) contacts are provided by lysine 262 and aspartate 267. Residue lysine 274 is part of the active site. Positions 285, 344, and 346 each coordinate Mn(2+). Residue arginine 348 is part of the active site.

This sequence belongs to the peptidase M17 family. Mn(2+) serves as cofactor.

The protein localises to the cytoplasm. It catalyses the reaction Release of an N-terminal amino acid, Xaa-|-Yaa-, in which Xaa is preferably Leu, but may be other amino acids including Pro although not Arg or Lys, and Yaa may be Pro. Amino acid amides and methyl esters are also readily hydrolyzed, but rates on arylamides are exceedingly low.. The enzyme catalyses Release of an N-terminal amino acid, preferentially leucine, but not glutamic or aspartic acids.. Presumably involved in the processing and regular turnover of intracellular proteins. Catalyzes the removal of unsubstituted N-terminal amino acids from various peptides. This Ehrlichia ruminantium (strain Gardel) protein is Probable cytosol aminopeptidase.